A 342-amino-acid polypeptide reads, in one-letter code: Holliday junction branch migration complex subunit RuvB (342 aa).

The large ATPase domain (RuvB-L) stretch occupies residues 1–185 (MRKDYLNSNK…FGINTRLAYY (185 aa)). ATP is bound by residues Leu-24, Arg-25, Gly-66, Lys-69, Thr-70, Thr-71, 132-134 (EDF), Arg-175, Tyr-185, and Arg-222. Residue Thr-70 coordinates Mg(2+). Positions 186 to 256 (DVTLLTQIVK…IAQMALKALD (71 aa)) are small ATPAse domain (RuvB-S). Residues 259-342 (EDGLDEMDNR…PPQRAGTLFE (84 aa)) form a head domain (RuvB-H) region. DNA-binding residues include Arg-314 and Arg-319.

This sequence belongs to the RuvB family. As to quaternary structure, homohexamer. Forms an RuvA(8)-RuvB(12)-Holliday junction (HJ) complex. HJ DNA is sandwiched between 2 RuvA tetramers; dsDNA enters through RuvA and exits via RuvB. An RuvB hexamer assembles on each DNA strand where it exits the tetramer. Each RuvB hexamer is contacted by two RuvA subunits (via domain III) on 2 adjacent RuvB subunits; this complex drives branch migration. In the full resolvosome a probable DNA-RuvA(4)-RuvB(12)-RuvC(2) complex forms which resolves the HJ.

It is found in the cytoplasm. The enzyme catalyses ATP + H2O = ADP + phosphate + H(+). The RuvA-RuvB-RuvC complex processes Holliday junction (HJ) DNA during genetic recombination and DNA repair, while the RuvA-RuvB complex plays an important role in the rescue of blocked DNA replication forks via replication fork reversal (RFR). RuvA specifically binds to HJ cruciform DNA, conferring on it an open structure. The RuvB hexamer acts as an ATP-dependent pump, pulling dsDNA into and through the RuvAB complex. RuvB forms 2 homohexamers on either side of HJ DNA bound by 1 or 2 RuvA tetramers; 4 subunits per hexamer contact DNA at a time. Coordinated motions by a converter formed by DNA-disengaged RuvB subunits stimulates ATP hydrolysis and nucleotide exchange. Immobilization of the converter enables RuvB to convert the ATP-contained energy into a lever motion, pulling 2 nucleotides of DNA out of the RuvA tetramer per ATP hydrolyzed, thus driving DNA branch migration. The RuvB motors rotate together with the DNA substrate, which together with the progressing nucleotide cycle form the mechanistic basis for DNA recombination by continuous HJ branch migration. Branch migration allows RuvC to scan DNA until it finds its consensus sequence, where it cleaves and resolves cruciform DNA. The protein is Holliday junction branch migration complex subunit RuvB of Amoebophilus asiaticus (strain 5a2).